Here is a 353-residue protein sequence, read N- to C-terminus: MTAILERRESERLWGRFCNWITSTENRLYIGWFGVLMIPTLLTATSVFIIAFIAAPPVDIDGIREPVSGSLLYGNNIISGAIIPTSAAIGLHFYPIWEAASVDEWLYNGGPYELIVLHFLLGVACYMGREWELSFRLGMRPWIAVAYSAPVAAATAVFLIYPIGQGSFSDGMPLGISGTFNFMIVFQAEHNILMHPFHMLGVAGVFGGSLFSAMHGSLVTSSLIRETTENESANAGYRFGQEEETYNIVAAHGYFGRLIFQYASFNNSRSLHFFLAAWPVVGIWFTALGISTMAFNLNGFNFNQSVVDSQGRVINTWADIINRANLGMEVMHERNAHNFPLDLAAIEAPSTNG.

An N-acetylthreonine modification is found at T2. Phosphothreonine is present on T2. 3 helical membrane-spanning segments follow: residues 29-46, 118-133, and 142-156; these read YIGW…TATS, HFLL…EWEL, and WIAV…AATA. H118 contributes to the chlorophyll a binding site. Y126 serves as a coordination point for pheophytin a. The [CaMn4O5] cluster site is built by D170 and E189. Residues 197-218 traverse the membrane as a helical segment; that stretch reads FHMLGVAGVFGGSLFSAMHGSL. Position 198 (H198) interacts with chlorophyll a. Residues H215 and 264–265 contribute to the a quinone site; that span reads SF. H215 is a binding site for Fe cation. Fe cation is bound at residue H272. Residues 274 to 288 traverse the membrane as a helical segment; the sequence is FLAAWPVVGIWFTAL. The [CaMn4O5] cluster site is built by H332, E333, D342, and A344. Positions 345–353 are excised as a propeptide; sequence AIEAPSTNG.

It belongs to the reaction center PufL/M/PsbA/D family. PSII is composed of 1 copy each of membrane proteins PsbA, PsbB, PsbC, PsbD, PsbE, PsbF, PsbH, PsbI, PsbJ, PsbK, PsbL, PsbM, PsbT, PsbX, PsbY, PsbZ, Psb30/Ycf12, at least 3 peripheral proteins of the oxygen-evolving complex and a large number of cofactors. It forms dimeric complexes. The cofactor is The D1/D2 heterodimer binds P680, chlorophylls that are the primary electron donor of PSII, and subsequent electron acceptors. It shares a non-heme iron and each subunit binds pheophytin, quinone, additional chlorophylls, carotenoids and lipids. D1 provides most of the ligands for the Mn4-Ca-O5 cluster of the oxygen-evolving complex (OEC). There is also a Cl(-1) ion associated with D1 and D2, which is required for oxygen evolution. The PSII complex binds additional chlorophylls, carotenoids and specific lipids.. In terms of processing, tyr-161 forms a radical intermediate that is referred to as redox-active TyrZ, YZ or Y-Z. Post-translationally, C-terminally processed by CTPA; processing is essential to allow assembly of the oxygen-evolving complex and thus photosynthetic growth.

The protein resides in the plastid. It localises to the chloroplast thylakoid membrane. The enzyme catalyses 2 a plastoquinone + 4 hnu + 2 H2O = 2 a plastoquinol + O2. In terms of biological role, photosystem II (PSII) is a light-driven water:plastoquinone oxidoreductase that uses light energy to abstract electrons from H(2)O, generating O(2) and a proton gradient subsequently used for ATP formation. It consists of a core antenna complex that captures photons, and an electron transfer chain that converts photonic excitation into a charge separation. The D1/D2 (PsbA/PsbD) reaction center heterodimer binds P680, the primary electron donor of PSII as well as several subsequent electron acceptors. The chain is Photosystem II protein D1 from Citrus sinensis (Sweet orange).